An 81-amino-acid chain; its full sequence is ATP synthase subunit c, chloroplastic (81 aa).

2 helical membrane-spanning segments follow: residues 3–23 (PLIS…ASIG) and 53–73 (LLLS…VALA).

Belongs to the ATPase C chain family. As to quaternary structure, F-type ATPases have 2 components, F(1) - the catalytic core - and F(0) - the membrane proton channel. F(1) has five subunits: alpha(3), beta(3), gamma(1), delta(1), epsilon(1). F(0) has four main subunits: a(1), b(1), b'(1) and c(10-14). The alpha and beta chains form an alternating ring which encloses part of the gamma chain. F(1) is attached to F(0) by a central stalk formed by the gamma and epsilon chains, while a peripheral stalk is formed by the delta, b and b' chains.

The protein resides in the plastid. Its subcellular location is the chloroplast thylakoid membrane. In terms of biological role, f(1)F(0) ATP synthase produces ATP from ADP in the presence of a proton or sodium gradient. F-type ATPases consist of two structural domains, F(1) containing the extramembraneous catalytic core and F(0) containing the membrane proton channel, linked together by a central stalk and a peripheral stalk. During catalysis, ATP synthesis in the catalytic domain of F(1) is coupled via a rotary mechanism of the central stalk subunits to proton translocation. Its function is as follows. Key component of the F(0) channel; it plays a direct role in translocation across the membrane. A homomeric c-ring of between 10-14 subunits forms the central stalk rotor element with the F(1) delta and epsilon subunits. In Huperzia lucidula (Shining clubmoss), this protein is ATP synthase subunit c, chloroplastic.